The primary structure comprises 202 residues: Probable WRKY transcription factor 59 (202 aa).

The segment at residues 103–168 is a DNA-binding region (WRKY); sequence DEKVALDDGY…YEGRHNHPSP (66 aa).

The protein belongs to the WRKY group II-c family.

It localises to the nucleus. Its function is as follows. Transcription factor. Interacts specifically with the W box (5'-(T)TGAC[CT]-3'), a frequently occurring elicitor-responsive cis-acting element. The polypeptide is Probable WRKY transcription factor 59 (WRKY59) (Arabidopsis thaliana (Mouse-ear cress)).